Consider the following 308-residue polypeptide: Ferredoxin--NADP reductase (308 aa).

7 residues coordinate FAD: E26, Q34, Y39, V77, F106, D266, and T306.

This sequence belongs to the ferredoxin--NADP reductase type 2 family. Homodimer. FAD serves as cofactor.

It carries out the reaction 2 reduced [2Fe-2S]-[ferredoxin] + NADP(+) + H(+) = 2 oxidized [2Fe-2S]-[ferredoxin] + NADPH. The chain is Ferredoxin--NADP reductase from Lactobacillus delbrueckii subsp. bulgaricus (strain ATCC 11842 / DSM 20081 / BCRC 10696 / JCM 1002 / NBRC 13953 / NCIMB 11778 / NCTC 12712 / WDCM 00102 / Lb 14).